The following is an 87-amino-acid chain: Mitochondrial import inner membrane translocase subunit TIM8 (87 aa).

The Twin CX3C motif motif lies at 44 to 68 (CFKNCISNVQNADLSSQEEQCLNNC). Intrachain disulfides connect cysteine 44–cysteine 68 and cysteine 48–cysteine 64.

This sequence belongs to the small Tim family. In terms of assembly, heterohexamer; composed of 3 copies of TIM8 and 3 copies of TIM13, named soluble 70 kDa complex. Associates with the TIM22 complex, whose core is composed of TIM22 and TIM54. Interacts with the transmembrane regions of multi-pass transmembrane proteins in transit.

It localises to the mitochondrion inner membrane. Functionally, mitochondrial intermembrane chaperone that participates in the import and insertion of some multi-pass transmembrane proteins into the mitochondrial inner membrane. Also required for the transfer of beta-barrel precursors from the TOM complex to the sorting and assembly machinery (SAM complex) of the outer membrane. Acts as a chaperone-like protein that protects the hydrophobic precursors from aggregation and guide them through the mitochondrial intermembrane space. The TIM8-TIM13 complex is non essential and only mediates the import of few proteins, while the predominant TIM9-TIM10 70 kDa complex is crucial and mediates the import of much more proteins. This Kluyveromyces lactis (strain ATCC 8585 / CBS 2359 / DSM 70799 / NBRC 1267 / NRRL Y-1140 / WM37) (Yeast) protein is Mitochondrial import inner membrane translocase subunit TIM8 (TIM8).